The sequence spans 301 residues: Type II restriction enzyme BslI subunit beta (301 aa).

Residues 62-82 (CPDGHTKWNQNLTKEMTCSEC) form a CHC2-type zinc finger.

Heterotetramer of two alpha and two beta subunits. The alpha subunit is believed to be responsible for DNA recognition, while the beta subunit is thought to mediate cleavage. Requires Zn(2+) as cofactor.

The catalysed reaction is Endonucleolytic cleavage of DNA to give specific double-stranded fragments with terminal 5'-phosphates.. A P subtype restriction enzyme that recognizes the double-stranded sequence 5'-CCN(7)GG-3' and cleaves after N-7. This Bacillus sp. (strain NEB-606) protein is Type II restriction enzyme BslI subunit beta.